Consider the following 386-residue polypeptide: Phosphoglycerate kinase (386 aa).

Substrate contacts are provided by residues 21–23, arginine 36, 59–62, arginine 113, and arginine 146; these read DLN and HLGR. Residues lysine 197, glutamate 314, and 340 to 343 contribute to the ATP site; that span reads GGDT.

It belongs to the phosphoglycerate kinase family. As to quaternary structure, monomer.

The protein localises to the cytoplasm. The catalysed reaction is (2R)-3-phosphoglycerate + ATP = (2R)-3-phospho-glyceroyl phosphate + ADP. Its pathway is carbohydrate degradation; glycolysis; pyruvate from D-glyceraldehyde 3-phosphate: step 2/5. This Vibrio vulnificus (strain CMCP6) protein is Phosphoglycerate kinase.